A 413-amino-acid chain; its full sequence is Argininosuccinate synthase (413 aa).

8–16 (AYSGGLDTS) lines the ATP pocket. L-citrulline is bound at residue tyrosine 87. Residue glycine 117 participates in ATP binding. 3 residues coordinate L-aspartate: threonine 119, asparagine 123, and aspartate 124. Asparagine 123 serves as a coordination point for L-citrulline. Residues arginine 127, serine 175, glutamate 259, and tyrosine 271 each contribute to the L-citrulline site.

Belongs to the argininosuccinate synthase family. Type 1 subfamily. As to quaternary structure, homotetramer.

The protein localises to the cytoplasm. The catalysed reaction is L-citrulline + L-aspartate + ATP = 2-(N(omega)-L-arginino)succinate + AMP + diphosphate + H(+). The protein operates within amino-acid biosynthesis; L-arginine biosynthesis; L-arginine from L-ornithine and carbamoyl phosphate: step 2/3. The sequence is that of Argininosuccinate synthase from Micrococcus luteus (strain ATCC 4698 / DSM 20030 / JCM 1464 / CCM 169 / CCUG 5858 / IAM 1056 / NBRC 3333 / NCIMB 9278 / NCTC 2665 / VKM Ac-2230) (Micrococcus lysodeikticus).